Here is a 180-residue protein sequence, read N- to C-terminus: Large ribosomal subunit protein uL5 (180 aa).

It belongs to the universal ribosomal protein uL5 family. In terms of assembly, part of the 50S ribosomal subunit; part of the 5S rRNA/L5/L18/L25 subcomplex. Contacts the 5S rRNA and the P site tRNA. Forms a bridge to the 30S subunit in the 70S ribosome.

In terms of biological role, this is one of the proteins that bind and probably mediate the attachment of the 5S RNA into the large ribosomal subunit, where it forms part of the central protuberance. In the 70S ribosome it contacts protein S13 of the 30S subunit (bridge B1b), connecting the 2 subunits; this bridge is implicated in subunit movement. Contacts the P site tRNA; the 5S rRNA and some of its associated proteins might help stabilize positioning of ribosome-bound tRNAs. The polypeptide is Large ribosomal subunit protein uL5 (Mycoplasma pneumoniae (strain ATCC 29342 / M129 / Subtype 1) (Mycoplasmoides pneumoniae)).